A 297-amino-acid polypeptide reads, in one-letter code: Tyrosine recombinase XerD (297 aa).

Residues 1–86 (MNDLIEDFLH…SLRSFFHYLM (86 aa)) form the Core-binding (CB) domain. Residues 107–291 (GLPKVLNLDD…TKLRLKDVYK (185 aa)) enclose the Tyr recombinase domain. Catalysis depends on residues Arg-147, Lys-171, His-243, Arg-246, and His-269. The active-site O-(3'-phospho-DNA)-tyrosine intermediate is Tyr-278.

It belongs to the 'phage' integrase family. XerD subfamily. As to quaternary structure, forms a cyclic heterotetrameric complex composed of two molecules of XerC and two molecules of XerD.

It is found in the cytoplasm. Functionally, site-specific tyrosine recombinase, which acts by catalyzing the cutting and rejoining of the recombining DNA molecules. The XerC-XerD complex is essential to convert dimers of the bacterial chromosome into monomers to permit their segregation at cell division. It also contributes to the segregational stability of plasmids. This Listeria monocytogenes serovar 1/2a (strain ATCC BAA-679 / EGD-e) protein is Tyrosine recombinase XerD.